The sequence spans 366 residues: Putative amino-acid transporter MJ1196 (366 aa).

The next 11 helical transmembrane spans lie at isoleucine 14–glycine 34, isoleucine 37–tyrosine 57, isoleucine 87–phenylalanine 107, phenylalanine 111–glycine 131, isoleucine 141–isoleucine 161, isoleucine 173–leucine 193, glycine 205–valine 225, phenylalanine 247–leucine 267, isoleucine 291–alanine 311, leucine 314–phenylalanine 334, and leucine 346–leucine 366.

The protein belongs to the amino acid-polyamine-organocation (APC) superfamily.

It localises to the cell membrane. The sequence is that of Putative amino-acid transporter MJ1196 from Methanocaldococcus jannaschii (strain ATCC 43067 / DSM 2661 / JAL-1 / JCM 10045 / NBRC 100440) (Methanococcus jannaschii).